Reading from the N-terminus, the 250-residue chain is Heat stress transcription factor C-1b (250 aa).

The stretch at 129–182 (EEGEEVRGTIEAVQRLREEQRGMEEELQAMDQRLRAAESRPGQMMAFLAKLADE) forms a coiled coil. The interval 144–180 (LREEQRGMEEELQAMDQRLRAAESRPGQMMAFLAKLA) is hydrophobic repeat HR-A/B. Residues 199-226 (AAGNNGSDPCKRRRIGADTGRGGVATGG) are disordered. Residues 209–212 (KRRR) carry the Nuclear localization signal motif.

It belongs to the HSF family. Class C subfamily. In terms of assembly, homotrimer. In terms of processing, exhibits temperature-dependent phosphorylation.

It is found in the nucleus. Functionally, transcriptional regulator that specifically binds DNA of heat shock promoter elements (HSE). The polypeptide is Heat stress transcription factor C-1b (HSFC1B) (Oryza sativa subsp. japonica (Rice)).